The sequence spans 231 residues: MGNYLSVAVELVCGLGILFIILKLLGKTQFSQITPFDFISALILGELVGNAVYDHEIKIKEIIFASLLWGVLIYIIEFITQKMKSSRKFLEGEPNIVIRKGELQYKVMKKNKIDINQLQSLLRQAGSFSIQEVEYAILETNGMVSVLPKSDFDKPTNKDLQIPSKSVSLPITLIIDGEIVRDNLKEAGVDEQWLKQELKKKNIDKTEDVLFAEWHKNKPLYTVTYEQSRST.

3 helical membrane passes run 5–25, 33–53, and 59–79; these read LSVAVELVCGLGILFIILKLL, ITPFDFISALILGELVGNAVY, and IKEIIFASLLWGVLIYIIEFI.

It belongs to the UPF0702 family.

The protein resides in the cell membrane. This chain is UPF0702 transmembrane protein YetF (yetF), found in Bacillus subtilis (strain 168).